The sequence spans 346 residues: Dihydroorotate dehydrogenase (quinone) (346 aa).

FMN contacts are provided by residues Ala61–Lys65 and Thr85. Lys65 provides a ligand contact to substrate. Residue Asn110–Phe114 coordinates substrate. Positions 138 and 171 each coordinate FMN. Position 171 (Asn171) interacts with substrate. The active-site Nucleophile is the Ser174. Asn176 contributes to the substrate binding site. FMN-binding residues include Lys216 and Thr244. Residue Asn245 to Thr246 coordinates substrate. Residues Gly267, Gly296, and Tyr317 to Ser318 contribute to the FMN site.

This sequence belongs to the dihydroorotate dehydrogenase family. Type 2 subfamily. In terms of assembly, monomer. It depends on FMN as a cofactor.

It is found in the cell membrane. The enzyme catalyses (S)-dihydroorotate + a quinone = orotate + a quinol. Its pathway is pyrimidine metabolism; UMP biosynthesis via de novo pathway; orotate from (S)-dihydroorotate (quinone route): step 1/1. Functionally, catalyzes the conversion of dihydroorotate to orotate with quinone as electron acceptor. This is Dihydroorotate dehydrogenase (quinone) from Marinomonas sp. (strain MWYL1).